Reading from the N-terminus, the 271-residue chain is Protein ABHD14A (271 aa).

Residues 35–55 traverse the membrane as a helical; Signal-anchor for type II membrane protein segment; the sequence is VALLGLSLLLMLLLYVGLPGP. N-linked (GlcNAc...) asparagine glycosylation is present at Asn-67. Residue Ser-171 is the Charge relay system of the active site. N-linked (GlcNAc...) asparagine glycosylation occurs at Asn-201. Active-site charge relay system residues include Asp-222 and His-249.

The protein belongs to the AB hydrolase superfamily. ABHD14 family.

The protein localises to the cytoplasm. The protein resides in the membrane. In terms of biological role, possible role in granule neuron development. The sequence is that of Protein ABHD14A from Homo sapiens (Human).